The chain runs to 266 residues: MSSPAKMYDIEILPGGFRPARPSMDVAGHIVKTPESFTVLPRGMGVCKTKIEIKRVPFGGAIYVYNIESLLLQQRISTMGGVVAGKVDELVIYFANFSDVPVKFTRGDPVAQLVLAPASIESATVKSYVGESVKPIVGEDDLIKKYQVKLIDLDKGGSGVETITLADNEYGVFTELPDAVDKFNDVIPRVYTVPEQIINVGTKDFMQPIVMWKDDYDAVKNMDNLKGLIKGLMNVDPAFQPLLKINDGRMPLAKLDVRRYYNRETL.

This is an uncharacterized protein from Ostreid herpesvirus 1 (isolate France) (OsHV-1).